A 406-amino-acid chain; its full sequence is Phosphoglycerate kinase (406 aa).

Substrate is bound by residues 22–24 (DLN), R37, 60–63 (HLGN), R119, and R152. ATP contacts are provided by residues K202, E325, and 355 to 358 (GGDT).

This sequence belongs to the phosphoglycerate kinase family. Monomer.

The protein resides in the cytoplasm. The enzyme catalyses (2R)-3-phosphoglycerate + ATP = (2R)-3-phospho-glyceroyl phosphate + ADP. It functions in the pathway carbohydrate degradation; glycolysis; pyruvate from D-glyceraldehyde 3-phosphate: step 2/5. This Orientia tsutsugamushi (strain Ikeda) (Rickettsia tsutsugamushi) protein is Phosphoglycerate kinase.